The primary structure comprises 135 residues: MVVRIRLSRFGCKNRPFFRVMAADSRSPRDGKHLEVLGYFNPLPGQDGGKRMGLKFDRIKYWLSVGAQPSDPVQRLLFRSGLLPPPPMVAMGRKGGARDTRPVDPMTGRYVDAENKTVNANDNQPKEEDTEAKSA.

The transit peptide at 1–7 (MVVRIRL) directs the protein to the chloroplast and mitochondrion. Residues 87–135 (PMVAMGRKGGARDTRPVDPMTGRYVDAENKTVNANDNQPKEEDTEAKSA) are disordered. The span at 124–135 (QPKEEDTEAKSA) shows a compositional bias: basic and acidic residues.

The protein belongs to the bacterial ribosomal protein bS16 family. In terms of assembly, component of the mitochondrial ribosome small subunit. In terms of tissue distribution, expressed at low levels in flowers, and, to a lower extent, in leaves, stems and roots.

The protein resides in the mitochondrion. Its subcellular location is the plastid. The protein localises to the chloroplast. The sequence is that of Small ribosomal subunit protein bS16m/bS16c from Arabidopsis thaliana (Mouse-ear cress).